Consider the following 346-residue polypeptide: Quinolinate synthase (346 aa).

Iminosuccinate is bound by residues histidine 47 and serine 68. Position 113 (cysteine 113) interacts with [4Fe-4S] cluster. Iminosuccinate-binding positions include 139 to 141 (YAN) and serine 156. Cysteine 200 contacts [4Fe-4S] cluster. Iminosuccinate is bound by residues 226 to 228 (HPE) and threonine 243. A [4Fe-4S] cluster-binding site is contributed by cysteine 297.

The protein belongs to the quinolinate synthase family. Type 1 subfamily. [4Fe-4S] cluster serves as cofactor.

Its subcellular location is the cytoplasm. It carries out the reaction iminosuccinate + dihydroxyacetone phosphate = quinolinate + phosphate + 2 H2O + H(+). Its pathway is cofactor biosynthesis; NAD(+) biosynthesis; quinolinate from iminoaspartate: step 1/1. Its function is as follows. Catalyzes the condensation of iminoaspartate with dihydroxyacetone phosphate to form quinolinate. The polypeptide is Quinolinate synthase (Photorhabdus laumondii subsp. laumondii (strain DSM 15139 / CIP 105565 / TT01) (Photorhabdus luminescens subsp. laumondii)).